A 1649-amino-acid chain; its full sequence is DNA-directed RNA polymerase subunit beta' (1649 aa).

Positions 62, 64, 77, and 80 each coordinate Zn(2+). Residues Asp746, Asp748, and Asp750 each contribute to the Mg(2+) site. The Zn(2+) site is built by Cys1077, Cys1268, Cys1275, and Cys1278.

The protein belongs to the RNA polymerase beta' chain family. The RNAP catalytic core consists of 2 alpha, 1 beta, 1 beta' and 1 omega subunit. When a sigma factor is associated with the core the holoenzyme is formed, which can initiate transcription. Requires Mg(2+) as cofactor. Zn(2+) serves as cofactor.

The enzyme catalyses RNA(n) + a ribonucleoside 5'-triphosphate = RNA(n+1) + diphosphate. DNA-dependent RNA polymerase catalyzes the transcription of DNA into RNA using the four ribonucleoside triphosphates as substrates. This is DNA-directed RNA polymerase subunit beta' from Thermosipho africanus (strain TCF52B).